The following is a 137-amino-acid chain: Small ribosomal subunit protein uS12 (137 aa).

Disordered stretches follow at residues 1 to 21 (MPTI…KSDS) and 36 to 57 (TKLS…TPKK). 3-methylthioaspartic acid is present on aspartate 102.

Belongs to the universal ribosomal protein uS12 family. As to quaternary structure, part of the 30S ribosomal subunit. Contacts proteins S8 and S17. May interact with IF1 in the 30S initiation complex.

Its function is as follows. With S4 and S5 plays an important role in translational accuracy. Functionally, interacts with and stabilizes bases of the 16S rRNA that are involved in tRNA selection in the A site and with the mRNA backbone. Located at the interface of the 30S and 50S subunits, it traverses the body of the 30S subunit contacting proteins on the other side and probably holding the rRNA structure together. The combined cluster of proteins S8, S12 and S17 appears to hold together the shoulder and platform of the 30S subunit. This chain is Small ribosomal subunit protein uS12, found in Streptococcus agalactiae serotype Ia (strain ATCC 27591 / A909 / CDC SS700).